The primary structure comprises 536 residues: MSSPSGGEDSKDDEKDEESNRLLPLSSSSQSQSLQSENYSDEVAFEAREKIVIVDVEGPHSIDAVDYVPPFSWRKLWLFTGPGFLMSIAFLDPGNLEGDLQAGAIAGYSLLWLLLWATVMGLLIQMLSARVGVATGRHLAELCRDEYSNWARYILWFMAEVALIGADIQEVIGSAIAIQILSNGFLPLWAGVLITASDCFMFLFLENYGVRKLEGVFAVLIATMALSFAWMCGDAKPSGKELLKGILIPRLGSKTIRQAVGVVGCVIMPHNVFLHSALVQSRKIDPQKKARVQEALTYYSIESSVALFVSFMINLFVTTVFAKGFYGTPQASSIGLVNAGQYLEEKYGGGLFPILYIWGIGLLAAGQSSTITGTYAGQFIMGGFLNLRLKKWTRALITRSFAIIPTIIVAIIFNTSEASLDILNEWLNVLQSMQIPFALIPLLTLVAKEQVMGVFKIGPVLERLAWTIAVLVILINGYLLIDFFISEVKGLLFGFLIGSGTVAYVSFIIYLVSRCGTSPSNGLSLELSERITCNGN.

A disordered region spans residues 1 to 37 (MSSPSGGEDSKDDEKDEESNRLLPLSSSSQSQSLQSE). Residues 22–36 (LLPLSSSSQSQSLQS) show a composition bias toward low complexity. Asn38 carries an N-linked (GlcNAc...) asparagine glycan. The next 12 helical transmembrane spans lie at 76–96 (LWLFTGPGFLMSIAFLDPGNL), 104–124 (AIAGYSLLWLLLWATVMGLLI), 161–181 (VALIGADIQEVIGSAIAIQIL), 185–205 (FLPLWAGVLITASDCFMFLFL), 213–233 (LEGVFAVLIATMALSFAWMCG), 259–279 (AVGVVGCVIMPHNVFLHSALV), 305–325 (VALFVSFMINLFVTTVFAKGF), 347–367 (YGGGLFPILYIWGIGLLAAGQ), 400–420 (SFAIIPTIIVAIIFNTSEASL), 435–455 (IPFALIPLLTLVAKEQVMGVF), 465–485 (AWTIAVLVILINGYLLIDFFI), and 492–512 (LFGFLIGSGTVAYVSFIIYLV).

The protein belongs to the NRAMP (TC 2.A.55) family.

The protein localises to the membrane. Its function is as follows. Probable divalent metal transporter. The protein is Metal transporter Nramp2 of Populus trichocarpa (Western balsam poplar).